We begin with the raw amino-acid sequence, 38 residues long: Beta-defensin 8 (38 aa).

Disulfide bonds link Cys-7–Cys-36, Cys-14–Cys-29, and Cys-19–Cys-37.

This sequence belongs to the beta-defensin family. As to expression, neutrophilic granules.

It is found in the secreted. In terms of biological role, has bactericidal activity. Active against E.coli ML35 and S.aureus 502A. This Bos taurus (Bovine) protein is Beta-defensin 8 (DEFB8).